A 235-amino-acid polypeptide reads, in one-letter code: uncharacterized protein (235 aa).

This is an uncharacterized protein from Mycoplasma pneumoniae (strain ATCC 29342 / M129 / Subtype 1) (Mycoplasmoides pneumoniae).